The sequence spans 348 residues: WD repeat-containing protein JIP5 (348 aa).

7 WD repeats span residues 5-44 (KLKN…GETS), 51-90 (PSKR…MTRE), 94-132 (AHEC…SIRT), 135-174 (QHFD…STPL), 179-218 (DQED…ADSV), 223-261 (GHPA…FLGV), and 264-304 (THEE…EDSD). Positions 299–318 (LFEDSDEDDEMEEDEPDSDE) are enriched in acidic residues. The disordered stretch occupies residues 299-348 (LFEDSDEDDEMEEDEPDSDEEKSKKKKKDNGMKDMSRGQAENDGSFFADL).

The protein belongs to the WD repeat WDR55 family.

It localises to the nucleus. The protein localises to the nucleolus. In Cryptococcus neoformans var. neoformans serotype D (strain JEC21 / ATCC MYA-565) (Filobasidiella neoformans), this protein is WD repeat-containing protein JIP5 (JIP5).